The following is a 505-amino-acid chain: Cytochrome P450 monooxygenase efuB (505 aa).

A helical membrane pass occupies residues 12–34; it reads GFWPTVAGTVATYLFYQIVATVY. Cys-450 provides a ligand contact to heme.

The protein belongs to the cytochrome P450 family. It depends on heme as a cofactor.

It localises to the membrane. It participates in secondary metabolite biosynthesis; terpenoid biosynthesis. Functionally, cytochrome P450 monooxygenase; part of the gene cluster that mediates the biosynthesis of enfumafungin, a glycosylated fernene-type triterpenoid with potent antifungal activity, mediated by its interaction with beta-1,3-glucan synthase and the fungal cell wall. The pathway begins with the terpene cyclase-glycosyl transferase fusion protein that most likely uses 2,3-oxidosqualene as substrate and catalyzes glycosylation immediately after cyclization. The fernene glycoside then could be processed by the desaturase efuI which catalyzes isomerization of a double bond established by efuA to form the core structure. The latter would then undergo a series of hydroxylations in unknown order at C-2, C-19, C-23 and C-25, which would be catalyzed by two of the three cytochrome P450 monooxygenases efuB, efuG or efuH. The hydroxy-group at C-25 becomes oxidized by the dehydrogenase efuE to enable a spontaneous, non-enzymatic hemiacetal formation with C-23. After hydroxylation at C-2, acetylation by the acetyltransferase efuC takes place. The final steps in enfumafungin biosynthesis require expansion of the 5-membered ring by lactonization via a Baeyer-Villiger reaction mediated by one of the BGC's cytochrome P450 monooxygenases (efuB, efuG or efuH) followed by ring cleavage. This type of reaction would establish a double bond between C-20 and C-21 which could be reduced by the reductase efuL to form the final product. The chain is Cytochrome P450 monooxygenase efuB from Hormonema carpetanum.